Reading from the N-terminus, the 188-residue chain is Josephin-2 (188 aa).

The 178-residue stretch at 11-188 (PPSVYHERQR…EEAGCWLNTS (178 aa)) folds into the Josephin domain. The Nucleophile role is filled by Cys24. His125 functions as the Proton acceptor in the catalytic mechanism.

Its subcellular location is the cytoplasm. It is found in the cytosol. The catalysed reaction is Thiol-dependent hydrolysis of ester, thioester, amide, peptide and isopeptide bonds formed by the C-terminal Gly of ubiquitin (a 76-residue protein attached to proteins as an intracellular targeting signal).. Its function is as follows. Cleaves 'Lys-63'-linked poly-ubiquitin chains, and with lesser efficiency 'Lys-48'-linked poly-ubiquitin chains (in vitro). May act as a deubiquitinating enzyme. In Mus musculus (Mouse), this protein is Josephin-2 (Josd2).